Here is a 214-residue protein sequence, read N- to C-terminus: Large ribosomal subunit protein uL3 (214 aa).

Residues 134 to 161 (THGNSLSHRAPGSIGQCQTPGRVMKGKK) form a disordered region. At Q151 the chain carries N5-methylglutamine.

This sequence belongs to the universal ribosomal protein uL3 family. As to quaternary structure, part of the 50S ribosomal subunit. Forms a cluster with proteins L14 and L19. Methylated by PrmB.

One of the primary rRNA binding proteins, it binds directly near the 3'-end of the 23S rRNA, where it nucleates assembly of the 50S subunit. The protein is Large ribosomal subunit protein uL3 of Teredinibacter turnerae (strain ATCC 39867 / T7901).